The sequence spans 197 residues: Probable molybdenum cofactor guanylyltransferase (197 aa).

GTP contacts are provided by residues 6-8 (LAG), K18, D65, and D97. D97 lines the Mg(2+) pocket.

It belongs to the MobA family. Mg(2+) is required as a cofactor.

It localises to the cytoplasm. It carries out the reaction Mo-molybdopterin + GTP + H(+) = Mo-molybdopterin guanine dinucleotide + diphosphate. In terms of biological role, transfers a GMP moiety from GTP to Mo-molybdopterin (Mo-MPT) cofactor (Moco or molybdenum cofactor) to form Mo-molybdopterin guanine dinucleotide (Mo-MGD) cofactor. The polypeptide is Probable molybdenum cofactor guanylyltransferase (Staphylococcus carnosus (strain TM300)).